The sequence spans 151 residues: 3-dehydroquinate dehydratase (151 aa).

Tyr24 functions as the Proton acceptor in the catalytic mechanism. Substrate contacts are provided by Asn76, His82, and Asp89. Residue His102 is the Proton donor of the active site. Substrate is bound by residues 103–104 (VS) and Arg113.

This sequence belongs to the type-II 3-dehydroquinase family. In terms of assembly, homododecamer.

It catalyses the reaction 3-dehydroquinate = 3-dehydroshikimate + H2O. It participates in metabolic intermediate biosynthesis; chorismate biosynthesis; chorismate from D-erythrose 4-phosphate and phosphoenolpyruvate: step 3/7. Functionally, catalyzes a trans-dehydration via an enolate intermediate. The polypeptide is 3-dehydroquinate dehydratase (Afipia carboxidovorans (strain ATCC 49405 / DSM 1227 / KCTC 32145 / OM5) (Oligotropha carboxidovorans)).